The chain runs to 248 residues: ATP synthase subunit a, chloroplastic (248 aa).

The next 5 membrane-spanning stretches (helical) occupy residues 35-55, 94-114, 133-153, 202-222, and 224-244; these read GQVF…SFLG, VPYI…GALI, INTT…AGLS, VFTL…GLFA, and SIQA…AMEG.

Belongs to the ATPase A chain family. F-type ATPases have 2 components, CF(1) - the catalytic core - and CF(0) - the membrane proton channel. CF(1) has five subunits: alpha(3), beta(3), gamma(1), delta(1), epsilon(1). CF(0) has four main subunits: a, b, b' and c.

The protein resides in the plastid. Its subcellular location is the chloroplast thylakoid membrane. Its function is as follows. Key component of the proton channel; it plays a direct role in the translocation of protons across the membrane. This is ATP synthase subunit a, chloroplastic from Porphyra purpurea (Red seaweed).